The following is a 949-amino-acid chain: RNA polymerase-associated protein RapA (949 aa).

A Helicase ATP-binding domain is found at 164–332 (EVADRIAPRV…FARLRLLDPN (169 aa)). Residue 177–184 (DEVGLGKT) participates in ATP binding. Positions 278 to 281 (DEAH) match the DEAH box motif. The Helicase C-terminal domain maps to 474–628 (RVEWLIDTLK…TCPTGNALQH (155 aa)).

It belongs to the SNF2/RAD54 helicase family. RapA subfamily. As to quaternary structure, interacts with the RNAP. Has a higher affinity for the core RNAP than for the holoenzyme. Its ATPase activity is stimulated by binding to RNAP.

In terms of biological role, transcription regulator that activates transcription by stimulating RNA polymerase (RNAP) recycling in case of stress conditions such as supercoiled DNA or high salt concentrations. Probably acts by releasing the RNAP, when it is trapped or immobilized on tightly supercoiled DNA. Does not activate transcription on linear DNA. Probably not involved in DNA repair. The chain is RNA polymerase-associated protein RapA from Stutzerimonas stutzeri (strain A1501) (Pseudomonas stutzeri).